We begin with the raw amino-acid sequence, 345 residues long: MTDKTSLSYKDAGVDIDAGNALVDRIKGVVKQTRRPEVMGGLGGFGALCALPQKYREPILVSGTDGVGTKLRLAMDLKRHDTIGIDLVAMCVNDLVVQGAEPLFFLDYYATGKLDVDTAASVITGIAEGCKQSGCALVGGETAEMPGMYHGEDYDVAGFCVGVVEKSEIIDGSKVQHGDVLVALAASGPHSNGYSLVRKVLEVSKTDPEQFELEGKSLADHLLAPTKIYVKSVLSLIEKVDVHAISHLTGGGFWENIPRVLPEGMQATIDESSWQWPAVFNWLQQAGNVSRYEMYRTFNCGVGMIIVLPAEQADEAVALLNSSGENAWKIGVITQTDAGDAVVIN.

The protein belongs to the AIR synthase family.

The protein resides in the cytoplasm. It carries out the reaction 2-formamido-N(1)-(5-O-phospho-beta-D-ribosyl)acetamidine + ATP = 5-amino-1-(5-phospho-beta-D-ribosyl)imidazole + ADP + phosphate + H(+). Its pathway is purine metabolism; IMP biosynthesis via de novo pathway; 5-amino-1-(5-phospho-D-ribosyl)imidazole from N(2)-formyl-N(1)-(5-phospho-D-ribosyl)glycinamide: step 2/2. This is Phosphoribosylformylglycinamidine cyclo-ligase from Pectobacterium atrosepticum (strain SCRI 1043 / ATCC BAA-672) (Erwinia carotovora subsp. atroseptica).